The primary structure comprises 637 residues: Pyrethroid hydrolase (637 aa).

It carries out the reaction (-)-trans-permethrin + H2O = (3-phenoxyphenyl)methanol + (1S,3R)-3-(2,2-dichlorovinyl)-2,2-dimethylcyclopropanecarboxylate + H(+). With respect to regulation, inhibited by Hg(2+), Ag(+) and rho-chloromercuribenzoate. In terms of biological role, catalyzes the hydrolysis of pyrethroids pesticides. Hydrolyzes cis-permethrin at approximately equal rate to trans-permethrin. The sequence is that of Pyrethroid hydrolase (estP) from Klebsiella sp.